We begin with the raw amino-acid sequence, 389 residues long: Na(+)/H(+) antiporter NhaA (389 aa).

11 helical membrane-spanning segments follow: residues 14–34 (AGGI…NSPL), 59–79 (LLLW…GLEV), 95–115 (SLPS…YLLF), 124–144 (AGWA…MALL), 154–174 (VFLL…IALF), 177–197 (SDLS…LVGL), 213–233 (LILW…GVII), 261–281 (FLIL…NMSL), 290–310 (IGIA…FSFI), 328–348 (IAPV…IASL), and 363–383 (LGTL…LSKV).

The protein belongs to the NhaA Na(+)/H(+) (TC 2.A.33) antiporter family.

Its subcellular location is the cell inner membrane. It catalyses the reaction Na(+)(in) + 2 H(+)(out) = Na(+)(out) + 2 H(+)(in). Na(+)/H(+) antiporter that extrudes sodium in exchange for external protons. This Shewanella sp. (strain W3-18-1) protein is Na(+)/H(+) antiporter NhaA.